The sequence spans 428 residues: Serine--tRNA ligase (428 aa).

An L-serine-binding site is contributed by 231 to 233 (TSE). ATP contacts are provided by residues 262–264 (RRE) and valine 278. Glutamate 285 contacts L-serine. Residue 349-352 (ELTS) coordinates ATP. Threonine 384 is an L-serine binding site.

The protein belongs to the class-II aminoacyl-tRNA synthetase family. Type-1 seryl-tRNA synthetase subfamily. As to quaternary structure, homodimer. The tRNA molecule binds across the dimer.

It is found in the cytoplasm. The catalysed reaction is tRNA(Ser) + L-serine + ATP = L-seryl-tRNA(Ser) + AMP + diphosphate + H(+). It catalyses the reaction tRNA(Sec) + L-serine + ATP = L-seryl-tRNA(Sec) + AMP + diphosphate + H(+). It participates in aminoacyl-tRNA biosynthesis; selenocysteinyl-tRNA(Sec) biosynthesis; L-seryl-tRNA(Sec) from L-serine and tRNA(Sec): step 1/1. Functionally, catalyzes the attachment of serine to tRNA(Ser). Is also able to aminoacylate tRNA(Sec) with serine, to form the misacylated tRNA L-seryl-tRNA(Sec), which will be further converted into selenocysteinyl-tRNA(Sec). The chain is Serine--tRNA ligase from Bifidobacterium longum (strain NCC 2705).